We begin with the raw amino-acid sequence, 225 residues long: Protein GrpE (225 aa).

Disordered regions lie at residues 1 to 44 (MTEE…ENAG) and 183 to 225 (VAVA…PDEG).

It belongs to the GrpE family. In terms of assembly, homodimer.

Its subcellular location is the cytoplasm. Functionally, participates actively in the response to hyperosmotic and heat shock by preventing the aggregation of stress-denatured proteins, in association with DnaK and GrpE. It is the nucleotide exchange factor for DnaK and may function as a thermosensor. Unfolded proteins bind initially to DnaJ; upon interaction with the DnaJ-bound protein, DnaK hydrolyzes its bound ATP, resulting in the formation of a stable complex. GrpE releases ADP from DnaK; ATP binding to DnaK triggers the release of the substrate protein, thus completing the reaction cycle. Several rounds of ATP-dependent interactions between DnaJ, DnaK and GrpE are required for fully efficient folding. The sequence is that of Protein GrpE from Streptomyces coelicolor (strain ATCC BAA-471 / A3(2) / M145).